Consider the following 347-residue polypeptide: Phenylalanine--tRNA ligase alpha subunit (347 aa).

Residue Glu-262 participates in Mg(2+) binding.

Belongs to the class-II aminoacyl-tRNA synthetase family. Phe-tRNA synthetase alpha subunit type 1 subfamily. As to quaternary structure, tetramer of two alpha and two beta subunits. Mg(2+) serves as cofactor.

Its subcellular location is the cytoplasm. The catalysed reaction is tRNA(Phe) + L-phenylalanine + ATP = L-phenylalanyl-tRNA(Phe) + AMP + diphosphate + H(+). The sequence is that of Phenylalanine--tRNA ligase alpha subunit from Roseiflexus castenholzii (strain DSM 13941 / HLO8).